Consider the following 906-residue polypeptide: Catenin alpha-1 (906 aa).

Threonine 2 carries the N-acetylthreonine modification. An involved in homodimerization region spans residues 2 to 228; sequence TAVHAGNINF…PILYTASQAC (227 aa). Residue lysine 57 forms a Glycyl lysine isopeptide (Lys-Gly) (interchain with G-Cter in SUMO2) linkage. The interaction with JUP and CTNNB1 stretch occupies residues 97–148; sequence VRKQGDLMKSAAGEFADDPCSSVKRGNMVRAARALLSAVTRLLILADMADVY. Phosphoserine is present on residues serine 264, serine 295, and serine 297. The tract at residues 325 to 394 is interaction with alpha-actinin; sequence TRDDRRERIV…AVMDHVSDSF (70 aa). Threonine 634 is modified (phosphothreonine). Serine 641 carries the phosphoserine modification. A Phosphothreonine modification is found at threonine 645. Phosphoserine occurs at positions 652 and 655. Threonine 658 bears the Phosphothreonine mark. Lysine 797 participates in a covalent cross-link: Glycyl lysine isopeptide (Lys-Gly) (interchain with G-Cter in SUMO2). Serine 851 carries the phosphoserine modification. Over residues 864–880 the composition is skewed to basic and acidic residues; the sequence is PEKKPLVKREKQDETQT. Residues 864–894 form a disordered region; sequence PEKKPLVKREKQDETQTKIKRASQKKHVNPV. Residues 881 to 891 are compositionally biased toward basic residues; the sequence is KIKRASQKKHV.

The protein belongs to the vinculin/alpha-catenin family. As to quaternary structure, monomer and homodimer; the monomer preferentially binds to CTNNB1 and the homodimer to actin. Component of an cadherin:catenin adhesion complex composed of at least of CDH26, beta-catenin/CTNNB1, alpha-catenin/CTNNA1 and p120 catenin/CTNND1. Possible component of an E-cadherin/ catenin adhesion complex together with E-cadherin/CDH1 and beta-catenin/CTNNB1 or gamma-catenin/JUP; the complex is located to adherens junctions. The stable association of CTNNA1 is controversial as CTNNA1 was shown not to bind to F-actin when assembled in the complex. Alternatively, the CTNNA1-containing complex may be linked to F-actin by other proteins such as LIMA1. Binds AFDN and F-actin. Interacts with LIMA1. Interacts with ARHGAP21. Interacts with AJUBA. Interacts with vinculin/VCL. Interacts with TJP2/ZO2 (via N-terminus). Interacts with TJP1/ZO1 (via N-terminus). Post-translationally, sumoylated. In terms of processing, phosphorylation seems to contribute to the strength of cell-cell adhesion rather than to the basic capacity for cell-cell adhesion. Expressed in cerebellum, heart, liver, small intestine, kidney and placenta (at protein level).

The protein localises to the cytoplasm. Its subcellular location is the cytoskeleton. It localises to the cell junction. It is found in the adherens junction. The protein resides in the cell membrane. The protein localises to the nucleus. Associates with the cytoplasmic domain of a variety of cadherins. The association of catenins to cadherins produces a complex which is linked to the actin filament network, and which seems to be of primary importance for cadherins cell-adhesion properties. Can associate with both E- and N-cadherins. Originally believed to be a stable component of E-cadherin/catenin adhesion complexes and to mediate the linkage of cadherins to the actin cytoskeleton at adherens junctions. In contrast, cortical actin was found to be much more dynamic than E-cadherin/catenin complexes and CTNNA1 was shown not to bind to F-actin when assembled in the complex suggesting a different linkage between actin and adherens junctions components. The homodimeric form may regulate actin filament assembly and inhibit actin branching by competing with the Arp2/3 complex for binding to actin filaments. Involved in the regulation of WWTR1/TAZ, YAP1 and TGFB1-dependent SMAD2 and SMAD3 nuclear accumulation. May play a crucial role in cell differentiation. The protein is Catenin alpha-1 of Mus musculus (Mouse).